Consider the following 302-residue polypeptide: Enolase-phosphatase E1 (302 aa).

Residues 1–10 (MSDSRLRRRQ) show a composition bias toward basic residues. Residues 1–25 (MSDSRLRRRQGTAGTDNKRRADGPH) are disordered. Residues 16-25 (DNKRRADGPH) are compositionally biased toward basic and acidic residues. Mg(2+) is bound by residues D40 and E42. Substrate contacts are provided by residues 183 to 184 (SS) and K217. Position 242 (D242) interacts with Mg(2+).

The protein belongs to the HAD-like hydrolase superfamily. MasA/MtnC family. Monomer. Mg(2+) serves as cofactor.

The protein localises to the cytoplasm. Its subcellular location is the nucleus. The enzyme catalyses 5-methylsulfanyl-2,3-dioxopentyl phosphate + H2O = 1,2-dihydroxy-5-(methylsulfanyl)pent-1-en-3-one + phosphate. Its pathway is amino-acid biosynthesis; L-methionine biosynthesis via salvage pathway; L-methionine from S-methyl-5-thio-alpha-D-ribose 1-phosphate: step 3/6. It functions in the pathway amino-acid biosynthesis; L-methionine biosynthesis via salvage pathway; L-methionine from S-methyl-5-thio-alpha-D-ribose 1-phosphate: step 4/6. In terms of biological role, bifunctional enzyme that catalyzes the enolization of 2,3-diketo-5-methylthiopentyl-1-phosphate (DK-MTP-1-P) into the intermediate 2-hydroxy-3-keto-5-methylthiopentenyl-1-phosphate (HK-MTPenyl-1-P), which is then dephosphorylated to form the acireductone 1,2-dihydroxy-3-keto-5-methylthiopentene (DHK-MTPene). The chain is Enolase-phosphatase E1 from Branchiostoma floridae (Florida lancelet).